We begin with the raw amino-acid sequence, 610 residues long: Transducer of Cdc42-dependent actin assembly protein 2 homolog (610 aa).

Residues 1-267 (MIPVSRFFTV…EVGKIDAEGD (267 aa)) form the F-BAR domain. Residues 283 to 315 (APFEIEDLGDPKNCDSRTNDSADGSGGKLLKSS) are disordered. Basic and acidic residues predominate over residues 291-302 (GDPKNCDSRTND). One can recognise an REM-1 domain in the interval 352-429 (SKPAHVRLSC…IHNLKEFYAM (78 aa)). A coiled-coil region spans residues 355 to 385 (AHVRLSCLRSKIRDMEKQLEQAIQGREGITR). Disordered stretches follow at residues 436 to 487 (EGQE…SSKN) and 499 to 519 (LISSPKTSKSSTPTPLRRRAE). Residues 437-449 (GQERSFGGRDTPD) are compositionally biased toward basic and acidic residues. The segment covering 453–464 (SMSGSSTNQSSS) has biased composition (low complexity). Positions 475 to 487 (AGNSSSADDSSKN) are enriched in polar residues. Residues 501 to 513 (SSPKTSKSSTPTP) are compositionally biased toward low complexity. An SH3 domain is found at 547 to 610 (ETAVTVTALF…VPTSYLQFPQ (64 aa)).

The protein belongs to the FNBP1 family. As to quaternary structure, interacts (via SH3 domain) with wsp-1 and abi-1. Interacts with cdc-42 and (via SH3 domain) with wve-1.

Its subcellular location is the cell junction. The protein resides in the cell membrane. It localises to the cytoplasmic vesicle. The protein localises to the cytoplasm. It is found in the recycling endosome. Functionally, plays a role in protein trafficking, actin organization and embryonic morphogenesis. Potentially acts as a cdc-42 effector. May play a role in egg laying. Together with toca-1, is required for protein trafficking regulating yolk protein clathrin-mediated endocytosis by oocytes during oogenesis and retrograde recycling and the sorting of recycling endosome cargo proteins such as mig-14. Also, together with toca-2, controls the distribution of actin at cell junctions. This chain is Transducer of Cdc42-dependent actin assembly protein 2 homolog, found in Caenorhabditis elegans.